The sequence spans 139 residues: Ribulose bisphosphate carboxylase small subunit (139 aa).

It belongs to the RuBisCO small chain family. Heterohexadecamer of 8 large and 8 small subunits.

Its subcellular location is the plastid. It localises to the chloroplast. In terms of biological role, ruBisCO catalyzes two reactions: the carboxylation of D-ribulose 1,5-bisphosphate, the primary event in carbon dioxide fixation, as well as the oxidative fragmentation of the pentose substrate in the photorespiration process. Both reactions occur simultaneously and in competition at the same active site. Although the small subunit is not catalytic it is essential for maximal activity. The sequence is that of Ribulose bisphosphate carboxylase small subunit from Chrysotila carterae (Marine alga).